The primary structure comprises 332 residues: MPMTMTQSATNPTATPVSANKASANAATTQDPSIFGKVAVVFGGNSNERAVSLDSGNAVLQALQSQGIDATHFDPKDQDVTELKNYDRVFNVLHGRGGEDGQLQGLLDWLGLPQTGSGVLASAIGMDKVRTKQLWHGCGLSTAPFAVLGADTDWQQIVNTLGLPLIVKPVHEGSSIGMSKVNTLDELPKAYEVAAGCGDVVMAEKWITGREFTIVIIDDEAYPVIRLQPADISNFYDYEAKYNRNDTQYHIPCGLSAEEEAHLQALSLAAFKAVDAKGWGRIDAMQDEEGNFWLLEINTVPGMTSHSLVPMAAKARGMNFEQLCWHILAQTL.

A compositionally biased stretch (polar residues) spans 1-17 (MPMTMTQSATNPTATPV). The disordered stretch occupies residues 1–28 (MPMTMTQSATNPTATPVSANKASANAAT). The segment covering 18–28 (SANKASANAAT) has biased composition (low complexity). In terms of domain architecture, ATP-grasp spans 132-329 (KQLWHGCGLS…FEQLCWHILA (198 aa)). Residue 158-213 (VNTLGLPLIVKPVHEGSSIGMSKVNTLDELPKAYEVAAGCGDVVMAEKWITGREFT) coordinates ATP. D283, E296, and N298 together coordinate Mg(2+).

Belongs to the D-alanine--D-alanine ligase family. The cofactor is Mg(2+). It depends on Mn(2+) as a cofactor.

Its subcellular location is the cytoplasm. It catalyses the reaction 2 D-alanine + ATP = D-alanyl-D-alanine + ADP + phosphate + H(+). Its pathway is cell wall biogenesis; peptidoglycan biosynthesis. Cell wall formation. The chain is D-alanine--D-alanine ligase from Psychrobacter sp. (strain PRwf-1).